The chain runs to 299 residues: MPIIIPQDLPARRILDAESVFTLGDADARRQDIRALQVVVLNLMPTKVTTETQIARVLANTPLQVELTLIHTASYQPTHTDPEHLRNFYSTFDQIRDRQFDGLIVTGAPVETLPWLAVDYWSELTTILDWSREAVRSSLFICWGAQAALQHFHGIEKQTLPAKRFGVFWHHLRDRSSPLVRGHDDDFLVPVSRHTEVIAAEVLAQSQLQILAESSEAGLHLLWDADQHRTYLFNHPEYDADTLDREYRRDREKGLPIQLPLNYYPNDDPNQVPRVRWRSHAQLLYTNWLNYEVYQPLSR.

The Acyl-thioester intermediate role is filled by Cys-142. Substrate contacts are provided by Lys-163 and Ser-192. Catalysis depends on His-235, which acts as the Proton acceptor. The active site involves Glu-237. Substrate is bound at residue Arg-249.

The protein belongs to the MetA family.

Its subcellular location is the cytoplasm. It catalyses the reaction L-homoserine + acetyl-CoA = O-acetyl-L-homoserine + CoA. It functions in the pathway amino-acid biosynthesis; L-methionine biosynthesis via de novo pathway; O-acetyl-L-homoserine from L-homoserine: step 1/1. Its function is as follows. Transfers an acetyl group from acetyl-CoA to L-homoserine, forming acetyl-L-homoserine. The polypeptide is Homoserine O-acetyltransferase (Synechococcus elongatus (strain ATCC 33912 / PCC 7942 / FACHB-805) (Anacystis nidulans R2)).